The primary structure comprises 317 residues: Phosphopantothenate--cysteine ligase 1 (317 aa).

This sequence belongs to the PPC synthetase family. Homodimer.

It catalyses the reaction (R)-4'-phosphopantothenate + L-cysteine + ATP = N-[(R)-4-phosphopantothenoyl]-L-cysteine + AMP + diphosphate + H(+). The protein operates within cofactor biosynthesis; coenzyme A biosynthesis; CoA from (R)-pantothenate: step 2/5. In terms of biological role, catalyzes the first step in the biosynthesis of coenzyme A from vitamin B5/pantothenate, where cysteine is conjugated to 4'-phosphopantothenate to form 4-phosphopantothenoylcysteine. The catalytic activity is not CTP- but ATP-dependent. This Arabidopsis thaliana (Mouse-ear cress) protein is Phosphopantothenate--cysteine ligase 1 (PPCS1).